Reading from the N-terminus, the 350-residue chain is Serine-threonine kinase receptor-associated protein (350 aa).

WD repeat units follow at residues 12–56 (GHTR…GTFL), 57–96 (GHKG…ELMT), 98–137 (AHKH…AEPK), 141–179 (GHTS…EVKS), 180–212 (LNFN…HSAV), 221–262 (EAPA…ESYK), and 263–302 (GHFG…TYGL). Phosphoserine occurs at positions 312, 335, and 338. Residues 326–350 (AEEELEEIASENSDSIYSSTPEVKA) are disordered. The span at 337–350 (NSDSIYSSTPEVKA) shows a compositional bias: polar residues. Phosphotyrosine is present on Y342.

It belongs to the WD repeat STRAP family. As to quaternary structure, part of the core SMN complex that contains SMN1, GEMIN2/SIP1, DDX20/GEMIN3, GEMIN4, GEMIN5, GEMIN6, GEMIN7, GEMIN8 and STRAP/UNRIP. Part of the SMN-Sm complex that contains SMN1, GEMIN2/SIP1, DDX20/GEMIN3, GEMIN4, GEMIN5, GEMIN6, GEMIN7, GEMIN8, STRAP/UNRIP and the Sm proteins SNRPB, SNRPD1, SNRPD2, SNRPD3, SNRPE, SNRPF and SNRPG. Interacts directly with GEMIN6 and GEMIN7. Associates with the SMN complex in the cytoplasm but not in the nucleus. Also interacts with CSDE1/UNR and MAWBP. Interacts with PDPK1. Interacts with TRIM48.

Its subcellular location is the cytoplasm. The protein localises to the nucleus. Functionally, the SMN complex catalyzes the assembly of small nuclear ribonucleoproteins (snRNPs), the building blocks of the spliceosome, and thereby plays an important role in the splicing of cellular pre-mRNAs. Most spliceosomal snRNPs contain a common set of Sm proteins SNRPB, SNRPD1, SNRPD2, SNRPD3, SNRPE, SNRPF and SNRPG that assemble in a heptameric protein ring on the Sm site of the small nuclear RNA to form the core snRNP (Sm core). In the cytosol, the Sm proteins SNRPD1, SNRPD2, SNRPE, SNRPF and SNRPG are trapped in an inactive 6S pICln-Sm complex by the chaperone CLNS1A that controls the assembly of the core snRNP. To assemble core snRNPs, the SMN complex accepts the trapped 5Sm proteins from CLNS1A forming an intermediate. Binding of snRNA inside 5Sm triggers eviction of the SMN complex, thereby allowing binding of SNRPD3 and SNRPB to complete assembly of the core snRNP. STRAP plays a role in the cellular distribution of the SMN complex. Negatively regulates TGF-beta signaling but positively regulates the PDPK1 kinase activity by enhancing its autophosphorylation and by significantly reducing the association of PDPK1 with 14-3-3 protein. This Rattus norvegicus (Rat) protein is Serine-threonine kinase receptor-associated protein (Strap).